Consider the following 194-residue polypeptide: Oligoribonuclease (194 aa).

The region spanning 11–174 is the Exonuclease domain; that stretch reads LIWIDLEMTG…SDVRDSINEL (164 aa). Residue Y132 is part of the active site.

It belongs to the oligoribonuclease family.

The protein resides in the cytoplasm. Functionally, 3'-to-5' exoribonuclease specific for small oligoribonucleotides. The protein is Oligoribonuclease of Xanthomonas oryzae pv. oryzae (strain MAFF 311018).